The chain runs to 223 residues: 2-C-methyl-D-erythritol 4-phosphate cytidylyltransferase (223 aa).

Belongs to the IspD/TarI cytidylyltransferase family. IspD subfamily.

It catalyses the reaction 2-C-methyl-D-erythritol 4-phosphate + CTP + H(+) = 4-CDP-2-C-methyl-D-erythritol + diphosphate. It participates in isoprenoid biosynthesis; isopentenyl diphosphate biosynthesis via DXP pathway; isopentenyl diphosphate from 1-deoxy-D-xylulose 5-phosphate: step 2/6. Its function is as follows. Catalyzes the formation of 4-diphosphocytidyl-2-C-methyl-D-erythritol from CTP and 2-C-methyl-D-erythritol 4-phosphate (MEP). In Prochlorococcus marinus (strain AS9601), this protein is 2-C-methyl-D-erythritol 4-phosphate cytidylyltransferase.